Reading from the N-terminus, the 120-residue chain is Small ribosomal subunit protein bS6 (120 aa).

This sequence belongs to the bacterial ribosomal protein bS6 family.

Its function is as follows. Binds together with bS18 to 16S ribosomal RNA. The polypeptide is Small ribosomal subunit protein bS6 (Blochmanniella floridana).